Consider the following 133-residue polypeptide: Phosphoribosyl-AMP cyclohydrolase (133 aa).

Residue Asp-77 participates in Mg(2+) binding. Cys-78 provides a ligand contact to Zn(2+). Mg(2+) is bound by residues Asp-79 and Asp-81. Zn(2+) contacts are provided by Cys-95 and Cys-102.

The protein belongs to the PRA-CH family. As to quaternary structure, homodimer. Mg(2+) serves as cofactor. Requires Zn(2+) as cofactor.

It localises to the cytoplasm. The enzyme catalyses 1-(5-phospho-beta-D-ribosyl)-5'-AMP + H2O = 1-(5-phospho-beta-D-ribosyl)-5-[(5-phospho-beta-D-ribosylamino)methylideneamino]imidazole-4-carboxamide. Its pathway is amino-acid biosynthesis; L-histidine biosynthesis; L-histidine from 5-phospho-alpha-D-ribose 1-diphosphate: step 3/9. Its function is as follows. Catalyzes the hydrolysis of the adenine ring of phosphoribosyl-AMP. In Thiobacillus denitrificans (strain ATCC 25259 / T1), this protein is Phosphoribosyl-AMP cyclohydrolase.